Reading from the N-terminus, the 469-residue chain is GTPase Der (469 aa).

EngA-type G domains lie at 30–193 (PVLA…PEVA) and 203–376 (RRVA…ASWD). GTP-binding positions include 36–43 (GRPNVGKS), 83–87 (DTGGW), 145–148 (NKVD), 209–216 (GKPNVGKS), 256–260 (DTAGL), and 321–324 (NKWD). In terms of domain architecture, KH-like spans 377-459 (TRIPTGPLNS…PIRINVRVRE (83 aa)).

This sequence belongs to the TRAFAC class TrmE-Era-EngA-EngB-Septin-like GTPase superfamily. EngA (Der) GTPase family. As to quaternary structure, associates with the 50S ribosomal subunit.

GTPase that plays an essential role in the late steps of ribosome biogenesis. In Mycobacterium marinum (strain ATCC BAA-535 / M), this protein is GTPase Der.